A 436-amino-acid polypeptide reads, in one-letter code: MSAAAASSAAGDSAKQPLLHHQRGNPPHVASVSSPSLPSAPPGALAGGRRFPGGLDVPNLKKRGGGTRSWIRVEAATASVQTLEVDKATMMRRCELPARDLRLLDPLFVYPSTILGRERAIVVNLEQIRCVITADEVLLLNSLDSYVLQYAAELQRRLLQRAEGDELPFEFRALELALEAACSFLDAQAAELEIEAYPLLDELTSKISTLNLERVRRLKSRLVALTRRVQKVRDEIEQLMDDDGDMAEMYLSEKKLRTEASFYGDQSMLGYNSVGDGTSFSAPVSPVSSPTESRKLEKAFSLCRSRHDSVKSSDNTATEHIQELEMLLEAYFVVIDSTLNKLTSLKEYIDDTEDFINIQLDNVRNQLIQFELLLTTATFVVAIFGVVAGIFGMNFETSVFSIQNAFQWVLIITGVIGAFIFCGFLWFFKYKRLMPL.

Composition is skewed to low complexity over residues 1–14 (MSAA…GDSA) and 29–54 (VASV…FPGG). The interval 1–60 (MSAAAASSAAGDSAKQPLLHHQRGNPPHVASVSSPSLPSAPPGALAGGRRFPGGLDVPNL) is disordered. A coiled-coil region spans residues 176–242 (LALEAACSFL…RDEIEQLMDD (67 aa)). The next 2 membrane-spanning stretches (helical) occupy residues 372–392 (LLLT…GIFG) and 408–428 (WVLI…LWFF). The Required for magnesium transport activity motif lies at 392-394 (GMN).

This sequence belongs to the CorA metal ion transporter (MIT) (TC 1.A.35.5) family.

It is found in the membrane. Its function is as follows. Magnesium transporter that may mediate the influx of magnesium. The polypeptide is Magnesium transporter MRS2-B (MRS2-B) (Oryza sativa subsp. indica (Rice)).